The chain runs to 105 residues: Putative membrane protein insertion efficiency factor (105 aa).

Belongs to the UPF0161 family.

The protein localises to the cell membrane. In terms of biological role, could be involved in insertion of integral membrane proteins into the membrane. The chain is Putative membrane protein insertion efficiency factor from Bifidobacterium longum (strain NCC 2705).